The following is a 96-amino-acid chain: Co-chaperonin GroES (96 aa).

Belongs to the GroES chaperonin family. As to quaternary structure, heptamer of 7 subunits arranged in a ring. Interacts with the chaperonin GroEL.

The protein resides in the cytoplasm. Its function is as follows. Together with the chaperonin GroEL, plays an essential role in assisting protein folding. The GroEL-GroES system forms a nano-cage that allows encapsulation of the non-native substrate proteins and provides a physical environment optimized to promote and accelerate protein folding. GroES binds to the apical surface of the GroEL ring, thereby capping the opening of the GroEL channel. This is Co-chaperonin GroES from Ralstonia nicotianae (strain ATCC BAA-1114 / GMI1000) (Ralstonia solanacearum).